We begin with the raw amino-acid sequence, 274 residues long: Rhamnulose-1-phosphate aldolase (274 aa).

Glu-117 is a catalytic residue. Zn(2+) contacts are provided by His-141, His-143, and His-212.

This sequence belongs to the aldolase class II family. RhaD subfamily. Homotetramer. Zn(2+) is required as a cofactor.

It is found in the cytoplasm. It carries out the reaction L-rhamnulose 1-phosphate = (S)-lactaldehyde + dihydroxyacetone phosphate. It functions in the pathway carbohydrate degradation; L-rhamnose degradation; glycerone phosphate from L-rhamnose: step 3/3. Its function is as follows. Catalyzes the reversible cleavage of L-rhamnulose-1-phosphate to dihydroxyacetone phosphate (DHAP) and L-lactaldehyde. In Escherichia coli O6:H1 (strain CFT073 / ATCC 700928 / UPEC), this protein is Rhamnulose-1-phosphate aldolase.